Reading from the N-terminus, the 104-residue chain is MIRKAFVMAVNPDAHAEYQRRHTPIWPELESVLKAHGAHHYSIFLDETRNLLFGVVEIESEERWNAVAQTAECQRWWQHMADVMPSHPDNSPVSQALREVFYLE.

Residue Y18 coordinates substrate. H22 (proton donor) is an active-site residue. Residues Y41 and 76 to 77 (WW) contribute to the substrate site.

The protein belongs to the rhamnose mutarotase family. Homodimer.

The protein resides in the cytoplasm. The catalysed reaction is alpha-L-rhamnose = beta-L-rhamnose. Its pathway is carbohydrate metabolism; L-rhamnose metabolism. In terms of biological role, involved in the anomeric conversion of L-rhamnose. This is L-rhamnose mutarotase from Yersinia pseudotuberculosis serotype O:1b (strain IP 31758).